The chain runs to 536 residues: Bifunctional purine biosynthesis protein PurH (536 aa).

The 151-residue stretch at 8–158 (IPAPDEVRIQ…KNHAYVTIVT (151 aa)) folds into the MGS-like domain.

The protein belongs to the PurH family.

The enzyme catalyses (6R)-10-formyltetrahydrofolate + 5-amino-1-(5-phospho-beta-D-ribosyl)imidazole-4-carboxamide = 5-formamido-1-(5-phospho-D-ribosyl)imidazole-4-carboxamide + (6S)-5,6,7,8-tetrahydrofolate. It carries out the reaction IMP + H2O = 5-formamido-1-(5-phospho-D-ribosyl)imidazole-4-carboxamide. Its pathway is purine metabolism; IMP biosynthesis via de novo pathway; 5-formamido-1-(5-phospho-D-ribosyl)imidazole-4-carboxamide from 5-amino-1-(5-phospho-D-ribosyl)imidazole-4-carboxamide (10-formyl THF route): step 1/1. It participates in purine metabolism; IMP biosynthesis via de novo pathway; IMP from 5-formamido-1-(5-phospho-D-ribosyl)imidazole-4-carboxamide: step 1/1. The polypeptide is Bifunctional purine biosynthesis protein PurH (Sinorhizobium fredii (strain NBRC 101917 / NGR234)).